Consider the following 236-residue polypeptide: 2-C-methyl-D-erythritol 4-phosphate cytidylyltransferase (236 aa).

The protein belongs to the IspD/TarI cytidylyltransferase family. IspD subfamily.

It catalyses the reaction 2-C-methyl-D-erythritol 4-phosphate + CTP + H(+) = 4-CDP-2-C-methyl-D-erythritol + diphosphate. The protein operates within isoprenoid biosynthesis; isopentenyl diphosphate biosynthesis via DXP pathway; isopentenyl diphosphate from 1-deoxy-D-xylulose 5-phosphate: step 2/6. In terms of biological role, catalyzes the formation of 4-diphosphocytidyl-2-C-methyl-D-erythritol from CTP and 2-C-methyl-D-erythritol 4-phosphate (MEP). The polypeptide is 2-C-methyl-D-erythritol 4-phosphate cytidylyltransferase (Paraburkholderia phymatum (strain DSM 17167 / CIP 108236 / LMG 21445 / STM815) (Burkholderia phymatum)).